Consider the following 705-residue polypeptide: Elongation factor G (705 aa).

Positions 8 to 294 constitute a tr-type G domain; sequence ELCRNFGIMA…SVIDYLPSPL (287 aa). Residues 17–24, 92–96, and 146–149 contribute to the GTP site; these read AHIDAGKT, DTPGH, and NKMD.

It belongs to the TRAFAC class translation factor GTPase superfamily. Classic translation factor GTPase family. EF-G/EF-2 subfamily.

Its subcellular location is the cytoplasm. Catalyzes the GTP-dependent ribosomal translocation step during translation elongation. During this step, the ribosome changes from the pre-translocational (PRE) to the post-translocational (POST) state as the newly formed A-site-bound peptidyl-tRNA and P-site-bound deacylated tRNA move to the P and E sites, respectively. Catalyzes the coordinated movement of the two tRNA molecules, the mRNA and conformational changes in the ribosome. This is Elongation factor G from Cereibacter sphaeroides (strain ATCC 17023 / DSM 158 / JCM 6121 / CCUG 31486 / LMG 2827 / NBRC 12203 / NCIMB 8253 / ATH 2.4.1.) (Rhodobacter sphaeroides).